The following is a 532-amino-acid chain: CTP synthase (532 aa).

An amidoligase domain region spans residues 1–269 (MNQASTRFIF…DTQILNHFNI (269 aa)). CTP is bound at residue serine 17. Position 17 (serine 17) interacts with UTP. ATP is bound by residues 18–23 (SLGKGL) and aspartate 75. Aspartate 75 and glutamate 143 together coordinate Mg(2+). CTP is bound by residues 150-152 (DIE), 190-195 (KTKPTQ), and lysine 226. Residues 190 to 195 (KTKPTQ) and lysine 226 contribute to the UTP site. A Glutamine amidotransferase type-1 domain is found at 294–532 (NVAIIGKYIK…FISFIKASLD (239 aa)). Glycine 355 contacts L-glutamine. Residue cysteine 382 is the Nucleophile; for glutamine hydrolysis of the active site. Residues 383–386 (MGMQ), glutamate 406, and arginine 462 each bind L-glutamine. Catalysis depends on residues histidine 509 and glutamate 511.

This sequence belongs to the CTP synthase family. Homotetramer.

It catalyses the reaction UTP + L-glutamine + ATP + H2O = CTP + L-glutamate + ADP + phosphate + 2 H(+). The catalysed reaction is L-glutamine + H2O = L-glutamate + NH4(+). It carries out the reaction UTP + NH4(+) + ATP = CTP + ADP + phosphate + 2 H(+). It functions in the pathway pyrimidine metabolism; CTP biosynthesis via de novo pathway; CTP from UDP: step 2/2. Allosterically activated by GTP, when glutamine is the substrate; GTP has no effect on the reaction when ammonia is the substrate. The allosteric effector GTP functions by stabilizing the protein conformation that binds the tetrahedral intermediate(s) formed during glutamine hydrolysis. Inhibited by the product CTP, via allosteric rather than competitive inhibition. Catalyzes the ATP-dependent amination of UTP to CTP with either L-glutamine or ammonia as the source of nitrogen. Regulates intracellular CTP levels through interactions with the four ribonucleotide triphosphates. This is CTP synthase from Ehrlichia chaffeensis (strain ATCC CRL-10679 / Arkansas).